Reading from the N-terminus, the 264-residue chain is Granzyme K (264 aa).

The first 24 residues, 1 to 24 (MTKFSSFSLFFLIVGAYMTHVCFN), serve as a signal peptide directing secretion. Residues 25–26 (ME) constitute a propeptide, activation peptide. Positions 27 to 259 (IIGGKEVSPH…YQTWIKSNLV (233 aa)) constitute a Peptidase S1 domain. Cysteine 52 and cysteine 68 are oxidised to a cystine. Active-site charge relay system residues include histidine 67 and aspartate 116. 3 disulfide bridges follow: cysteine 149-cysteine 220, cysteine 181-cysteine 199, and cysteine 210-cysteine 234. The active-site Charge relay system is the serine 214.

This sequence belongs to the peptidase S1 family. Granzyme subfamily. Expressed in lung, spleen, thymus and peripheral blood leukocytes.

Its subcellular location is the secreted. It localises to the cytoplasmic granule. This Homo sapiens (Human) protein is Granzyme K (GZMK).